The primary structure comprises 704 residues: DNA ligase (704 aa).

NAD(+) is bound by residues Asp-43–Asp-47, Ser-92–Leu-93, and Glu-124. Catalysis depends on Lys-126, which acts as the N6-AMP-lysine intermediate. Positions 147, 182, 298, and 322 each coordinate NAD(+). Residues Cys-427, Cys-430, Cys-445, and Cys-451 each contribute to the Zn(2+) site. In terms of domain architecture, BRCT spans Pro-625–Ala-704.

The protein belongs to the NAD-dependent DNA ligase family. LigA subfamily. The cofactor is Mg(2+). Requires Mn(2+) as cofactor.

It catalyses the reaction NAD(+) + (deoxyribonucleotide)n-3'-hydroxyl + 5'-phospho-(deoxyribonucleotide)m = (deoxyribonucleotide)n+m + AMP + beta-nicotinamide D-nucleotide.. Functionally, DNA ligase that catalyzes the formation of phosphodiester linkages between 5'-phosphoryl and 3'-hydroxyl groups in double-stranded DNA using NAD as a coenzyme and as the energy source for the reaction. It is essential for DNA replication and repair of damaged DNA. In Cereibacter sphaeroides (strain ATCC 17023 / DSM 158 / JCM 6121 / CCUG 31486 / LMG 2827 / NBRC 12203 / NCIMB 8253 / ATH 2.4.1.) (Rhodobacter sphaeroides), this protein is DNA ligase.